Consider the following 360-residue polypeptide: Phospho-N-acetylmuramoyl-pentapeptide-transferase (360 aa).

The Periplasmic portion of the chain corresponds to 1-25; sequence MLVWLAEHLVKYYSGFNVFSYLTFR. The helical transmembrane segment at 26–46 threads the bilayer; sequence AIVSLLTALFISLWMGPRMIA. At 47–71 the chain is on the cytoplasmic side; sequence RLQKLSFGQVVRNDGPESHFSKRGT. A helical transmembrane segment spans residues 72 to 92; it reads PTMGGIMILTSIVISVLLWAY. A topological domain (periplasmic) is located at residue Pro-93. A helical transmembrane segment spans residues 94-114; sequence SNPYVWCVLVVLIGYGIIGFV. Over 115–131 the chain is Cytoplasmic; it reads DDYRKVVRKDTKGLIAR. The helical transmembrane segment at 132–152 threads the bilayer; that stretch reads WKYFWMSVIALGVAFALYLVG. Residues 153 to 167 are Periplasmic-facing; that stretch reads KDTPATQLVVPFFKD. Residues 168–188 traverse the membrane as a helical segment; it reads VMPQLGLFYILLSYFVIVGTG. The Cytoplasmic portion of the chain corresponds to 189-198; sequence NAVNLTDGLD. Residues 199-219 traverse the membrane as a helical segment; that stretch reads GLAIMPTVFVAAGFALVAWAT. At 220–235 the chain is on the periplasmic side; that stretch reads GNMNFANYLHIPYLRH. The chain crosses the membrane as a helical span at residues 236 to 256; it reads AGELVIVCTAIVGAGLGFLWF. Over 257–262 the chain is Cytoplasmic; the sequence is NTYPAQ. A helical membrane pass occupies residues 263–283; the sequence is VFMGDVGSLALGGALGIIAVL. Over 284 to 287 the chain is Periplasmic; that stretch reads LRQE. Residues 288–308 traverse the membrane as a helical segment; the sequence is FLLVIMGGVFVVETLSVILQV. Over 309-337 the chain is Cytoplasmic; it reads GSFKLRGQRIFRMAPIHHHYELKGWPEPR. A helical membrane pass occupies residues 338–358; it reads VIVRFWIISLMLVLIGLATLK. At 359–360 the chain is on the periplasmic side; the sequence is VR.

This sequence belongs to the glycosyltransferase 4 family. MraY subfamily. The cofactor is Mg(2+).

It is found in the cell inner membrane. The enzyme catalyses UDP-N-acetyl-alpha-D-muramoyl-L-alanyl-gamma-D-glutamyl-meso-2,6-diaminopimeloyl-D-alanyl-D-alanine + di-trans,octa-cis-undecaprenyl phosphate = di-trans,octa-cis-undecaprenyl diphospho-N-acetyl-alpha-D-muramoyl-L-alanyl-D-glutamyl-meso-2,6-diaminopimeloyl-D-alanyl-D-alanine + UMP. Its pathway is cell wall biogenesis; peptidoglycan biosynthesis. Its function is as follows. Catalyzes the initial step of the lipid cycle reactions in the biosynthesis of the cell wall peptidoglycan: transfers peptidoglycan precursor phospho-MurNAc-pentapeptide from UDP-MurNAc-pentapeptide onto the lipid carrier undecaprenyl phosphate, yielding undecaprenyl-pyrophosphoryl-MurNAc-pentapeptide, known as lipid I. This is Phospho-N-acetylmuramoyl-pentapeptide-transferase from Salmonella gallinarum (strain 287/91 / NCTC 13346).